We begin with the raw amino-acid sequence, 310 residues long: Olfactory receptor 8B8 (310 aa).

The Extracellular segment spans residues 1-27 (MATENASVPEFILAGLTDQPGLRMPLF). N-linked (GlcNAc...) asparagine glycosylation occurs at asparagine 5. The chain crosses the membrane as a helical span at residues 28–48 (FLFLGFYMVTMVGNLGLITLI). Topologically, residues 49–55 (GLNSHLH) are cytoplasmic. The chain crosses the membrane as a helical span at residues 56–76 (TPMYFFLFNLSLIDFCYSTVI). At 77–98 (TPKMLVSFVSKKNIISYSGCMT) the chain is on the extracellular side. Cysteines 96 and 188 form a disulfide. The chain crosses the membrane as a helical span at residues 99–119 (QLFFFLFFVVSESFILSAMAY). The Cytoplasmic portion of the chain corresponds to 120–140 (DRYVAICNPLMYTVTMSPQVC). The helical transmembrane segment at 141 to 161 (LLLLLGVYVMGFAGAMAHTAF) threads the bilayer. The Extracellular portion of the chain corresponds to 162-195 (MVKLTFCADKLVNHYMCDILPLLERSCTSTYVNE). Residues 196-216 (LVVFIVVGIDIGVPTVTIFIS) form a helical membrane-spanning segment. At 217-238 (YALILSSILRISSTEGRSKAFS) the chain is on the cytoplasmic side. A helical transmembrane segment spans residues 239 to 259 (TCSSHIIAVSLFFGSGAFMYL). The Extracellular portion of the chain corresponds to 260 to 270 (KPSSLLPMNQG). A helical membrane pass occupies residues 271–291 (KVSSLFYTIVVPMLNPLIYSL). Residues 292-310 (RNKDVKVALRKTLSRSSFS) lie on the Cytoplasmic side of the membrane.

It belongs to the G-protein coupled receptor 1 family.

It localises to the cell membrane. Odorant receptor. This chain is Olfactory receptor 8B8, found in Mus musculus (Mouse).